The sequence spans 115 residues: Large ribosomal subunit protein bL20c (115 aa).

Belongs to the bacterial ribosomal protein bL20 family.

The protein localises to the plastid. It localises to the chloroplast. Its function is as follows. Binds directly to 23S ribosomal RNA and is necessary for the in vitro assembly process of the 50S ribosomal subunit. It is not involved in the protein synthesizing functions of that subunit. The polypeptide is Large ribosomal subunit protein bL20c (Angiopteris evecta (Mule's foot fern)).